Consider the following 123-residue polypeptide: Guanine nucleotide exchange factor MSS4 (123 aa).

Position 1 is an N-acetylmethionine (methionine 1). The MSS4 domain occupies 9-123; sequence ELVSAEGRNR…YVALERVSHE (115 aa). Residues cysteine 23, cysteine 26, cysteine 94, and cysteine 97 each contribute to the Zn(2+) site.

Belongs to the DSS4/MSS4 family. In terms of assembly, interacts with RAB8A. Ubiquitous.

In terms of biological role, guanine-nucleotide-releasing protein that acts on members of the SEC4/YPT1/RAB subfamily. Stimulates GDP release from both YPT1, RAB3A and RAB10, but is less active on these proteins than on the SEC4 protein. Might play a general role in vesicular transport. This is Guanine nucleotide exchange factor MSS4 (Rabif) from Rattus norvegicus (Rat).